A 395-amino-acid chain; its full sequence is MNQMWRTHLQSKVEQLKEQGQYRNLHVTEKAEETWLIRNEKRMLNLASNNYLGLAGDERLKEAAIACTRKYGTGATASRLVVGNYPLYEEVERSICDWKGTERALIVNSGYTANVGAISALACRHDMIFSDKLNHASIVDGIILSGAEHKRYRHNDLDHLEKMLQIASPEKRKLIVTDTVFSMDGDIAYLRGLVQLKEKYGAIIIVDEAHASGIYGIGGAGLSHVEKDIAQKIDIHMGTFSKALGCYGAYLTGDSIYIEYLQNMMRSLIFTTALPPGTLGAIRKAIEIVKEDNERRERLIENGAYFRTHLQEAGFDIGNSSTHIVPIVVGSNENTLRFSERLQEVGIAAIAIRPPTVPVGSSRVRFAVTSQHTIADLKWAIQHIIRIGKEEGFLV.

Residue arginine 23 participates in substrate binding. 110–111 (GY) serves as a coordination point for pyridoxal 5'-phosphate. Histidine 135 is a binding site for substrate. Pyridoxal 5'-phosphate is bound by residues serine 182, 207 to 210 (DEAH), and 239 to 242 (TFSK). Lysine 242 is modified (N6-(pyridoxal phosphate)lysine). Threonine 356 is a binding site for substrate.

It belongs to the class-II pyridoxal-phosphate-dependent aminotransferase family. BioF subfamily. Homodimer. Pyridoxal 5'-phosphate serves as cofactor.

It catalyses the reaction 6-carboxyhexanoyl-[ACP] + L-alanine + H(+) = (8S)-8-amino-7-oxononanoate + holo-[ACP] + CO2. It participates in cofactor biosynthesis; biotin biosynthesis. Functionally, catalyzes the decarboxylative condensation of pimeloyl-[acyl-carrier protein] and L-alanine to produce 8-amino-7-oxononanoate (AON), [acyl-carrier protein], and carbon dioxide. This chain is Putative 8-amino-7-oxononanoate synthase (bioF), found in Bacillus mycoides (strain KBAB4) (Bacillus weihenstephanensis).